A 278-amino-acid chain; its full sequence is Elongation factor Ts (278 aa).

Residues Thr-82 to Val-85 form an involved in Mg(2+) ion dislocation from EF-Tu region.

This sequence belongs to the EF-Ts family.

The protein resides in the cytoplasm. Functionally, associates with the EF-Tu.GDP complex and induces the exchange of GDP to GTP. It remains bound to the aminoacyl-tRNA.EF-Tu.GTP complex up to the GTP hydrolysis stage on the ribosome. This chain is Elongation factor Ts (tsf), found in Streptomyces coelicolor (strain ATCC BAA-471 / A3(2) / M145).